The following is a 147-amino-acid chain: Large ribosomal subunit protein uL16 (147 aa).

Belongs to the universal ribosomal protein uL16 family. In terms of assembly, part of the 50S ribosomal subunit.

Binds 23S rRNA and is also seen to make contacts with the A and possibly P site tRNAs. The sequence is that of Large ribosomal subunit protein uL16 from Clostridium novyi (strain NT).